Reading from the N-terminus, the 408-residue chain is Digeranylgeranylglycerophospholipid reductase 1 (408 aa).

The FAD site is built by alanine 15, glutamate 34, cysteine 45, alanine 46, glycine 48, arginine 99, valine 123, aspartate 279, glycine 291, and isoleucine 292.

Belongs to the geranylgeranyl reductase family. DGGGPL reductase subfamily. It depends on FAD as a cofactor.

It catalyses the reaction a 2,3-bis-O-phytanyl-sn-glycerol 1-phospholipid + 8 oxidized 2[4Fe-4S]-[ferredoxin] = a 2,3-bis-O-(geranylgeranyl)-sn-glycerol 1-phospholipid + 8 reduced 2[4Fe-4S]-[ferredoxin] + 16 H(+). The enzyme catalyses 2,3-bis-O-(phytanyl)-sn-glycerol 1-phosphate + 8 oxidized 2[4Fe-4S]-[ferredoxin] = 2,3-bis-O-(geranylgeranyl)-sn-glycerol 1-phosphate + 8 reduced 2[4Fe-4S]-[ferredoxin] + 16 H(+). It carries out the reaction a 2,3-bis-O-phytanyl-sn-glycerol 1-phospholipid + 8 A = a 2,3-bis-O-(geranylgeranyl)-sn-glycerol 1-phospholipid + 8 AH2. The catalysed reaction is CDP-2,3-bis-O-(geranylgeranyl)-sn-glycerol + 8 AH2 = CDP-2,3-bis-O-(phytanyl)-sn-glycerol + 8 A. It catalyses the reaction archaetidylserine + 8 AH2 = 2,3-bis-O-phytanyl-sn-glycero-3-phospho-L-serine + 8 A. Its pathway is membrane lipid metabolism; glycerophospholipid metabolism. Its function is as follows. Is involved in the reduction of 2,3-digeranylgeranylglycerophospholipids (unsaturated archaeols) into 2,3-diphytanylglycerophospholipids (saturated archaeols) in the biosynthesis of archaeal membrane lipids. Catalyzes the formation of archaetidic acid (2,3-di-O-phytanyl-sn-glyceryl phosphate) from 2,3-di-O-geranylgeranylglyceryl phosphate (DGGGP) via the hydrogenation of each double bond of the isoprenoid chains. Is also probably able to reduce double bonds of geranyl groups in CDP-2,3-bis-O-(geranylgeranyl)-sn-glycerol and archaetidylserine, thus acting at various stages in the biosynthesis of archaeal membrane lipids. This Methanococcoides burtonii (strain DSM 6242 / NBRC 107633 / OCM 468 / ACE-M) protein is Digeranylgeranylglycerophospholipid reductase 1.